The chain runs to 325 residues: D-xylose 1-dehydrogenase (NADP(+)) 2 (325 aa).

Positions 1 to 22 (MMFGILGTAGIGVKSVIPAVQA) are cleaved as a signal peptide.

Belongs to the Gfo/Idh/MocA family. In terms of assembly, homotetramer.

The protein localises to the secreted. It catalyses the reaction D-xylose + NADP(+) = D-xylono-1,5-lactone + NADPH + H(+). Functionally, NADP-dependent D-xylose dehydrogenase involved in the degradation of D-xylose, a major component of hemicelluloses such as xylan. Even if it shows D-xylose dehydrogenase activity, it is not essential for D-xylose degradation. The polypeptide is D-xylose 1-dehydrogenase (NADP(+)) 2 (Haloferax volcanii (strain ATCC 29605 / DSM 3757 / JCM 8879 / NBRC 14742 / NCIMB 2012 / VKM B-1768 / DS2) (Halobacterium volcanii)).